The primary structure comprises 200 residues: MRKVGIMGGTFNPIHFVHLLLAEAAYEQYHLEEIIFLPSKRPAYKPLSELIEEEHRFHMIELAISDNPHFSVSDMEFHREGNTYTADTLLELTKKFPDTEFYFIIGGDSLFELEKWSRPEIVMEKAHIVAAGRDDKDDDQMLQKIMELNEKYKAKIELLRVPMMEVSSRMLRERVKEGQSIRYFLPEAVRSYIIKHGFYL.

The protein belongs to the NadD family.

It carries out the reaction nicotinate beta-D-ribonucleotide + ATP + H(+) = deamido-NAD(+) + diphosphate. It participates in cofactor biosynthesis; NAD(+) biosynthesis; deamido-NAD(+) from nicotinate D-ribonucleotide: step 1/1. In terms of biological role, catalyzes the reversible adenylation of nicotinate mononucleotide (NaMN) to nicotinic acid adenine dinucleotide (NaAD). In Lachnoclostridium phytofermentans (strain ATCC 700394 / DSM 18823 / ISDg) (Clostridium phytofermentans), this protein is Probable nicotinate-nucleotide adenylyltransferase.